The sequence spans 211 residues: Small ribosomal subunit protein uS3 (211 aa).

Residues Leu-38 to Arg-106 enclose the KH type-2 domain.

The protein belongs to the universal ribosomal protein uS3 family. Part of the 30S ribosomal subunit. Forms a tight complex with proteins S10 and S14.

Its function is as follows. Binds the lower part of the 30S subunit head. Binds mRNA in the 70S ribosome, positioning it for translation. This Citrifermentans bemidjiense (strain ATCC BAA-1014 / DSM 16622 / JCM 12645 / Bem) (Geobacter bemidjiensis) protein is Small ribosomal subunit protein uS3.